Reading from the N-terminus, the 115-residue chain is Large ribosomal subunit protein P2 (115 aa).

Methionine 1 bears the N-acetylmethionine mark. A phosphoserine mark is found at serine 17 and serine 19. At lysine 21 the chain carries N6-acetyllysine; alternate. At lysine 21 the chain carries N6-succinyllysine; alternate. A compositionally biased stretch (low complexity) spans 78 to 90; that stretch reads GSAAPAAGSAPAA. A disordered region spans residues 78 to 115; that stretch reads GSAAPAAGSAPAAAEEKKDEKKEESEESDDDMGFGLFD. Phosphoserine is present on residues serine 79 and serine 86. The segment covering 91–101 has biased composition (basic and acidic residues); it reads AEEKKDEKKEE. Residues serine 102 and serine 105 each carry the phosphoserine modification.

This sequence belongs to the eukaryotic ribosomal protein P1/P2 family. As to quaternary structure, heterodimer with P1 at the lateral ribosomal stalk of the large ribosomal subunit.

Functionally, plays an important role in the elongation step of protein synthesis. The sequence is that of Large ribosomal subunit protein P2 (RPLP2) from Homo sapiens (Human).